The following is a 338-amino-acid chain: Probable dual-specificity RNA methyltransferase RlmN (338 aa).

Glu-89 functions as the Proton acceptor in the catalytic mechanism. The 231-residue stretch at 95-325 (HNYGMSACVT…AILRKEQGHD (231 aa)) folds into the Radical SAM core domain. The cysteines at positions 102 and 330 are disulfide-linked. Residues Cys-109, Cys-113, and Cys-116 each contribute to the [4Fe-4S] cluster site. Residues 156-157 (GE), Ser-188, 211-213 (SLH), and Asn-287 each bind S-adenosyl-L-methionine. Cys-330 serves as the catalytic S-methylcysteine intermediate.

Belongs to the radical SAM superfamily. RlmN family. Requires [4Fe-4S] cluster as cofactor.

The protein resides in the cytoplasm. The catalysed reaction is adenosine(2503) in 23S rRNA + 2 reduced [2Fe-2S]-[ferredoxin] + 2 S-adenosyl-L-methionine = 2-methyladenosine(2503) in 23S rRNA + 5'-deoxyadenosine + L-methionine + 2 oxidized [2Fe-2S]-[ferredoxin] + S-adenosyl-L-homocysteine. The enzyme catalyses adenosine(37) in tRNA + 2 reduced [2Fe-2S]-[ferredoxin] + 2 S-adenosyl-L-methionine = 2-methyladenosine(37) in tRNA + 5'-deoxyadenosine + L-methionine + 2 oxidized [2Fe-2S]-[ferredoxin] + S-adenosyl-L-homocysteine. Functionally, specifically methylates position 2 of adenine 2503 in 23S rRNA and position 2 of adenine 37 in tRNAs. The protein is Probable dual-specificity RNA methyltransferase RlmN of Acholeplasma laidlawii (strain PG-8A).